A 434-amino-acid polypeptide reads, in one-letter code: N-lysine methyltransferase SMYD2-B (434 aa).

In terms of domain architecture, SET spans 8–242; that stretch reads PGIEQFASPG…PGQEIYTSYI (235 aa). 18 to 20 is an S-adenosyl-L-methionine binding site; the sequence is KGR. C53, C56, C66, C69, C75, C79, H87, and C91 together coordinate Zn(2+). The segment at 53–91 adopts an MYND-type zinc-finger fold; that stretch reads CEQCFTRKKGLAKCGKCKKAFYCNANCQKKNWPMHKLEC. S-adenosyl-L-methionine-binding positions include H138, 207–208, and 259–261; these read NH and YYF.

This sequence belongs to the class V-like SAM-binding methyltransferase superfamily.

The protein localises to the cytoplasm. It localises to the cytosol. Its subcellular location is the nucleus. It catalyses the reaction L-lysyl(4)-[histone H3] + 3 S-adenosyl-L-methionine = N(6),N(6),N(6)-trimethyl-L-lysyl(4)-[histone H3] + 3 S-adenosyl-L-homocysteine + 3 H(+). It carries out the reaction L-lysyl-[protein] + S-adenosyl-L-methionine = N(6)-methyl-L-lysyl-[protein] + S-adenosyl-L-homocysteine + H(+). Functionally, protein-lysine N-methyltransferase that methylates both histones and non-histone proteins, including p53/TP53 and RB1. Specifically trimethylates histone H3 'Lys-4' (H3K4me3) in vivo. The activity requires interaction with HSP90alpha. Shows even higher methyltransferase activity on p53/TP53. Monomethylates 'Lys-370' of p53/TP53, leading to decreased DNA-binding activity and subsequent transcriptional regulation activity of p53/TP53. Monomethylates RB1 at 'Lys-860'. This is N-lysine methyltransferase SMYD2-B (smyd2b) from Danio rerio (Zebrafish).